The primary structure comprises 544 residues: Chaperonin GroEL (544 aa).

ATP-binding positions include 30-33 (TLGP), Lys-51, 87-91 (DGTTT), Gly-415, 481-483 (DAL), and Asp-497.

The protein belongs to the chaperonin (HSP60) family. In terms of assembly, forms a cylinder of 14 subunits composed of two heptameric rings stacked back-to-back. Interacts with the co-chaperonin GroES.

It localises to the cytoplasm. The catalysed reaction is ATP + H2O + a folded polypeptide = ADP + phosphate + an unfolded polypeptide.. In terms of biological role, together with its co-chaperonin GroES, plays an essential role in assisting protein folding. The GroEL-GroES system forms a nano-cage that allows encapsulation of the non-native substrate proteins and provides a physical environment optimized to promote and accelerate protein folding. In Chlamydia trachomatis serovar A (strain ATCC VR-571B / DSM 19440 / HAR-13), this protein is Chaperonin GroEL.